A 29-amino-acid chain; its full sequence is Beta-theraphotoxin-Gr1b (29 aa).

Disulfide bonds link C2/C16, C9/C21, and C15/C25. Leucine amide is present on L29.

It belongs to the neurotoxin 30 (phrixotoxin) family. In terms of tissue distribution, expressed by the venom gland.

The protein localises to the secreted. In terms of biological role, inhibits the voltage-gated sodium channels Nav1.1/SCN1A (IC(50)=360 nM), Nav1.2/SCN2A (IC(50)=600 nM), Nav1.3/SCN3A (IC(50)=1280), Nav1.4/SCN4A (IC(50)=330 nM), Nav1.6/SCN8A (IC(50)=1200 nM), Nav1.7/SCN9A (IC(50)=1-40 nM), and voltage-gated potassium channels Kv11.1/KCNH2 (IC(50)=4.8 uM). Induces analgesia in mammals. This analgesia is mediated by a non-opioid receptor related mechanism. The protein is Beta-theraphotoxin-Gr1b of Grammostola rosea (Chilean rose tarantula).